A 203-amino-acid polypeptide reads, in one-letter code: MGNTDKLMNQIFDLKFTSKSLQRQSRKCEKEEKAEKLKVKKAIEKGNMDGARIYAENAIRKRSEQMNYLRLASRLDAVVARLDTQAKMTTITKSMTNIVKSLESSLATGNLQKMSETMDSFEKQFVNMEVQAEFMENAMAGSTSLSTPEGEVNSLMQQVADDYGLEVSVGLPQPAGHAIPTKTEEKVDEDDLSRRLAELKARG.

2 coiled-coil regions span residues 13-51 (DLKFTSKSLQRQSRKCEKEEKAEKLKVKKAIEKGNMDGA) and 109-140 (GNLQKMSETMDSFEKQFVNMEVQAEFMENAMA). Residues 172–203 (PQPAGHAIPTKTEEKVDEDDLSRRLAELKARG) form a disordered region. Residues 192–203 (LSRRLAELKARG) show a composition bias toward basic and acidic residues.

Belongs to the SNF7 family. Interacts with CHMP1A and LIP5. Interacts with VPS2.2.

The protein localises to the cytoplasm. Its subcellular location is the endosome membrane. Functionally, involved in ESCRT-dependent multivesicular body (MVB) formation and sorting of endosomal cargo proteins into MVBs. Mediates the MVB sorting of the auxin carriers PIN1, PIN2 and AUX1. Required for embryonic axis establishment and seedling growth. Required for autophagic degradation of plastid proteins. Promotes the efficient sequestration of cargo from plastids into autophagosomes. Mediates the efficient delivery of autophagic plastid bodies to the vacuole, but not into the cytoplasm. This Arabidopsis thaliana (Mouse-ear cress) protein is ESCRT-related protein CHMP1B.